The primary structure comprises 125 residues: Large ribosomal subunit protein bL12 (125 aa).

It belongs to the bacterial ribosomal protein bL12 family. In terms of assembly, homodimer. Part of the ribosomal stalk of the 50S ribosomal subunit. Forms a multimeric L10(L12)X complex, where L10 forms an elongated spine to which 2 to 4 L12 dimers bind in a sequential fashion. Binds GTP-bound translation factors.

Its function is as follows. Forms part of the ribosomal stalk which helps the ribosome interact with GTP-bound translation factors. Is thus essential for accurate translation. This is Large ribosomal subunit protein bL12 from Gluconacetobacter diazotrophicus (strain ATCC 49037 / DSM 5601 / CCUG 37298 / CIP 103539 / LMG 7603 / PAl5).